A 110-amino-acid chain; its full sequence is Small ribosomal subunit protein bS16 (110 aa).

Residues 81-104 (VRPAEVLGKQKQEKERSAKKKDAT) are compositionally biased toward basic and acidic residues. Residues 81-110 (VRPAEVLGKQKQEKERSAKKKDATASETSE) are disordered.

Belongs to the bacterial ribosomal protein bS16 family.

The chain is Small ribosomal subunit protein bS16 from Prochlorococcus marinus (strain NATL1A).